The following is a 565-amino-acid chain: NAD-dependent malic enzyme (565 aa).

Y104 (proton donor) is an active-site residue. Residue R157 coordinates NAD(+). The Proton acceptor role is filled by K175. Positions 246, 247, and 270 each coordinate a divalent metal cation. Positions 270 and 418 each coordinate NAD(+).

Belongs to the malic enzymes family. As to quaternary structure, homotetramer. Mg(2+) serves as cofactor. It depends on Mn(2+) as a cofactor.

The catalysed reaction is (S)-malate + NAD(+) = pyruvate + CO2 + NADH. It catalyses the reaction oxaloacetate + H(+) = pyruvate + CO2. The chain is NAD-dependent malic enzyme from Escherichia coli O157:H7.